We begin with the raw amino-acid sequence, 321 residues long: GDP-L-fucose synthase (321 aa).

An NADP(+)-binding site is contributed by 14–20 (GGSGLVG). The Proton donor/acceptor role is filled by tyrosine 143. Residues lysine 147, 170–173 (PTNV), and histidine 186 each bind NADP(+). Residues lysine 194, tryptophan 208, arginine 215, and aspartate 277 each coordinate substrate.

It belongs to the NAD(P)-dependent epimerase/dehydratase family. Fucose synthase subfamily. Homodimer.

It catalyses the reaction GDP-beta-L-fucose + NADP(+) = GDP-4-dehydro-alpha-D-rhamnose + NADPH + H(+). The protein operates within nucleotide-sugar biosynthesis; GDP-L-fucose biosynthesis via de novo pathway; GDP-L-fucose from GDP-alpha-D-mannose: step 2/2. Functionally, catalyzes the two-step NADP-dependent conversion of GDP-4-dehydro-6-deoxy-D-mannose to GDP-fucose, involving an epimerase and a reductase reaction. This Mus musculus (Mouse) protein is GDP-L-fucose synthase.